The following is a 328-amino-acid chain: Glycerol-3-phosphate dehydrogenase [NAD(P)+] (328 aa).

Residues Trp-15, His-35, Tyr-51, and Lys-107 each contribute to the NADPH site. Sn-glycerol 3-phosphate-binding residues include Lys-107, Gly-135, and Ser-137. Position 139 (Ala-139) interacts with NADPH. 5 residues coordinate sn-glycerol 3-phosphate: Lys-190, Asp-243, Ser-253, Arg-254, and Asn-255. Residue Lys-190 is the Proton acceptor of the active site. Arg-254 is an NADPH binding site. Residues Leu-276 and Glu-278 each contribute to the NADPH site.

It belongs to the NAD-dependent glycerol-3-phosphate dehydrogenase family.

It localises to the cytoplasm. The enzyme catalyses sn-glycerol 3-phosphate + NAD(+) = dihydroxyacetone phosphate + NADH + H(+). It catalyses the reaction sn-glycerol 3-phosphate + NADP(+) = dihydroxyacetone phosphate + NADPH + H(+). The protein operates within membrane lipid metabolism; glycerophospholipid metabolism. Functionally, catalyzes the reduction of the glycolytic intermediate dihydroxyacetone phosphate (DHAP) to sn-glycerol 3-phosphate (G3P), the key precursor for phospholipid synthesis. In Rhodopseudomonas palustris (strain BisA53), this protein is Glycerol-3-phosphate dehydrogenase [NAD(P)+].